We begin with the raw amino-acid sequence, 345 residues long: Ferrochelatase (345 aa).

2 residues coordinate Fe cation: histidine 215 and glutamate 296.

Belongs to the ferrochelatase family.

Its subcellular location is the cytoplasm. It catalyses the reaction heme b + 2 H(+) = protoporphyrin IX + Fe(2+). The protein operates within porphyrin-containing compound metabolism; protoheme biosynthesis; protoheme from protoporphyrin-IX: step 1/1. Functionally, catalyzes the ferrous insertion into protoporphyrin IX. In Rhodopseudomonas palustris (strain BisA53), this protein is Ferrochelatase.